A 393-amino-acid polypeptide reads, in one-letter code: METFLFTSESVNEGHPDKLCDQISDAVLDACLAQDPESKVACETCSKTNMVMVFGEITTKADVDYEKIVRDTCRGIGFTSDDVGLDADNCKALVNIEQQSPDIAQGVHGHLSKRPEEIGAGDQGHMFGYATDETPELMPLTHVLATRLGARLTEVRKNGTCPWLRPDGKTQVTVEYYNDKGAMVPVRVHTVLISTQHDETVTNDEIAADLKEHVIKPVIPEKYLDEKTIFHLNPSGRFVIGGPHGDAGLTGRKIIIDTYGGWGAHGGGAFSGKDPTKVDRSGAYIVRQAAKSIVANGLARRCVVQVSYAIGVPEPLSVFVDTYGTGKIPDKEILKIVKETFDFRPGMIAINLDLKRGGNSRFLKTAAYGHFGRDDTDFTWEVVKPLKWDKVHA.

Glutamate 9 is a binding site for Mg(2+). Histidine 15 lines the ATP pocket. Glutamate 43 contacts K(+). Residues glutamate 56 and glutamine 99 each contribute to the L-methionine site. ATP contacts are provided by residues 167–169, 235–238, aspartate 246, 252–253, alanine 269, lysine 273, and lysine 277; these read DGK, SGRF, and RK. Aspartate 246 is an L-methionine binding site. L-methionine is bound at residue lysine 277.

The protein belongs to the AdoMet synthase family. As to quaternary structure, homotetramer. Mn(2+) is required as a cofactor. Requires Mg(2+) as cofactor. The cofactor is Co(2+). It depends on K(+) as a cofactor.

Its subcellular location is the cytoplasm. It carries out the reaction L-methionine + ATP + H2O = S-adenosyl-L-methionine + phosphate + diphosphate. The protein operates within amino-acid biosynthesis; S-adenosyl-L-methionine biosynthesis; S-adenosyl-L-methionine from L-methionine: step 1/1. In terms of biological role, catalyzes the formation of S-adenosylmethionine from methionine and ATP. The reaction comprises two steps that are both catalyzed by the same enzyme: formation of S-adenosylmethionine (AdoMet) and triphosphate, and subsequent hydrolysis of the triphosphate. The polypeptide is S-adenosylmethionine synthase (SAMS) (Gossypium hirsutum (Upland cotton)).